The sequence spans 440 residues: tRNA(Ile)-lysidine synthase (440 aa).

19–24 lines the ATP pocket; sequence SGGLDS.

It belongs to the tRNA(Ile)-lysidine synthase family.

It localises to the cytoplasm. It catalyses the reaction cytidine(34) in tRNA(Ile2) + L-lysine + ATP = lysidine(34) in tRNA(Ile2) + AMP + diphosphate + H(+). Functionally, ligates lysine onto the cytidine present at position 34 of the AUA codon-specific tRNA(Ile) that contains the anticodon CAU, in an ATP-dependent manner. Cytidine is converted to lysidine, thus changing the amino acid specificity of the tRNA from methionine to isoleucine. The polypeptide is tRNA(Ile)-lysidine synthase (Buchnera aphidicola subsp. Acyrthosiphon pisum (strain APS) (Acyrthosiphon pisum symbiotic bacterium)).